Here is a 563-residue protein sequence, read N- to C-terminus: Arginine--tRNA ligase (563 aa).

The 'HIGH' region signature appears at 121–131; the sequence is PNIAKPFSIGH.

It belongs to the class-I aminoacyl-tRNA synthetase family. In terms of assembly, monomer.

Its subcellular location is the cytoplasm. It carries out the reaction tRNA(Arg) + L-arginine + ATP = L-arginyl-tRNA(Arg) + AMP + diphosphate. This is Arginine--tRNA ligase from Streptococcus agalactiae serotype III (strain NEM316).